The following is a 361-amino-acid chain: tRNA/tmRNA (uracil-C(5))-methyltransferase (361 aa).

S-adenosyl-L-methionine is bound by residues Q185, Y213, N218, E234, and D294. Residue C319 is the Nucleophile of the active site. The active-site Proton acceptor is the E353.

It belongs to the class I-like SAM-binding methyltransferase superfamily. RNA M5U methyltransferase family. TrmA subfamily.

The enzyme catalyses uridine(54) in tRNA + S-adenosyl-L-methionine = 5-methyluridine(54) in tRNA + S-adenosyl-L-homocysteine + H(+). The catalysed reaction is uridine(341) in tmRNA + S-adenosyl-L-methionine = 5-methyluridine(341) in tmRNA + S-adenosyl-L-homocysteine + H(+). Functionally, dual-specificity methyltransferase that catalyzes the formation of 5-methyluridine at position 54 (m5U54) in all tRNAs, and that of position 341 (m5U341) in tmRNA (transfer-mRNA). The polypeptide is tRNA/tmRNA (uracil-C(5))-methyltransferase (Pseudomonas putida (strain W619)).